The chain runs to 537 residues: MRSEVPSSTSPSFLSPPFIHLPLLSLSSPTPLPHSSSSTFSLFSTMAASQIGLVGLAVMGQNLALNIAEKGFPISVYNRTASKVDETLDRAKSEGDLPLSGHYTPRDFVLSIERPRSIVILVKAGSPVDQTIASLASFMEPGDTIIDGGNEWYQNTERRLSDAHSNGLLYLGMGVSGGEEGARFGPSLMPGGDFQAYDNIQHILKKVAAQVDDGPCVTYIGEGGSGNFVKMVHNGIEYGDMQLISEAYDVLKNVGGLSNEELGQIFDEWNKSELESFLVEITADIFKVKDDLADGGLVDKILDKTGMKGTGKWTVQQAAELSVAAPTIAASLDCRYLSGLKEERENAAKILEAAGMKEEVNAIRGGVDKKRLIDDVRQALYASKICSYAQGMNLLRAKSAEMGWDLNLGELARIWKGGCIIRAVFLDSIKQAYQRNPNLASLVVDPEFAKEMVQRQAAWRRVVGLAVSAGISTPGMCASLAYFDTYRRARLPANLVQAQRDYFGAHTYERVDLPGSYHTEWSKLARKSDPNVAAALH.

A chloroplast-targeting transit peptide spans 1-44 (MRSEVPSSTSPSFLSPPFIHLPLLSLSSPTPLPHSSSSTFSLFS). NADP(+) is bound by residues 55 to 60 (GLAVMG), 78 to 80 (NRT), 122 to 124 (VKA), and Asn-150. Residues Asn-150 and 176–178 (SGG) each bind substrate. The active-site Proton acceptor is Lys-230. A substrate-binding site is contributed by 233-234 (HN). Catalysis depends on Glu-237, which acts as the Proton donor. Substrate contacts are provided by Tyr-238, Lys-308, Arg-335, Arg-500, and His-506.

It belongs to the 6-phosphogluconate dehydrogenase family. As to quaternary structure, homodimer.

Its subcellular location is the plastid. The protein localises to the chloroplast. The catalysed reaction is 6-phospho-D-gluconate + NADP(+) = D-ribulose 5-phosphate + CO2 + NADPH. It participates in carbohydrate degradation; pentose phosphate pathway; D-ribulose 5-phosphate from D-glucose 6-phosphate (oxidative stage): step 3/3. Catalyzes the oxidative decarboxylation of 6-phosphogluconate to ribulose 5-phosphate and CO(2), with concomitant reduction of NADP to NADPH. The chain is 6-phosphogluconate dehydrogenase, decarboxylating 2, chloroplastic from Spinacia oleracea (Spinach).